Reading from the N-terminus, the 1180-residue chain is Phosphatidylinositol 4-kinase (1180 aa).

Residues 1 to 206 (MNKISDTIII…SVYLHSPSTS (206 aa)) enclose the PIK helical domain. Disordered stretches follow at residues 15-84 (NEDE…KHKE), 257-327 (ENDH…ENDN), 355-391 (TSPI…NNIN), 768-799 (TISN…IPHS), and 832-894 (AISP…SPFG). A compositionally biased stretch (low complexity) spans 38-74 (NNNNNNILTNVNNNKNNTITSSGGSDSSSSSSNNNNN). The span at 75-84 (KIKKSKKHKE) shows a compositional bias: basic residues. Residues 257–270 (ENDHHIENDPKKDI) are compositionally biased toward basic and acidic residues. 4 stretches are compositionally biased toward low complexity: residues 271 to 325 (NSNN…SGEN), 364 to 391 (NNNN…NNIN), 768 to 793 (TISN…PTLP), and 835 to 879 (PPSQ…SPTN). The PI3K/PI4K catalytic domain occupies 895–1164 (ESWQEKIERY…LISYSIDHFK (270 aa)). Residues 901–907 (IERYKKI) are G-loop. Residues 1030–1038 (QIKDRHNGN) form a catalytic loop region. Residues 1049–1073 (HIDFGFILSNSPGNISFESAPFKLT) are activation loop.

This sequence belongs to the PI3/PI4-kinase family. Type III PI4K subfamily.

It catalyses the reaction a 1,2-diacyl-sn-glycero-3-phospho-(1D-myo-inositol) + ATP = a 1,2-diacyl-sn-glycero-3-phospho-(1D-myo-inositol 4-phosphate) + ADP + H(+). Functionally, acts on phosphatidylinositol (PtdIns) in the first committed step in the production of the second messenger inositol-1,4,5,-trisphosphate. This Dictyostelium discoideum (Social amoeba) protein is Phosphatidylinositol 4-kinase (pikD).